Consider the following 307-residue polypeptide: Elongation factor Ts (307 aa).

The tract at residues Thr-80–Val-83 is involved in Mg(2+) ion dislocation from EF-Tu.

Belongs to the EF-Ts family.

Its subcellular location is the cytoplasm. Functionally, associates with the EF-Tu.GDP complex and induces the exchange of GDP to GTP. It remains bound to the aminoacyl-tRNA.EF-Tu.GTP complex up to the GTP hydrolysis stage on the ribosome. In Nitrobacter hamburgensis (strain DSM 10229 / NCIMB 13809 / X14), this protein is Elongation factor Ts.